The sequence spans 264 residues: Proliferating cell nuclear antigen 2 (264 aa).

Belongs to the PCNA family. As to quaternary structure, homotrimer. Oligomer. Interacts with ORC1 (via PIP-box motif). Interacts with FEN1.

It localises to the nucleus. The protein resides in the chromosome. It is found in the cytoplasm. May be involved in DNA damage response. Appears not to be involved in DNA replication in trophozoites. The chain is Proliferating cell nuclear antigen 2 from Plasmodium falciparum (isolate 3D7).